The primary structure comprises 683 residues: Protein distal antenna (683 aa).

The HTH psq-type domain maps to 7–58 (TKGKRPLRSLTPRDKIHAIQRIHDGESKASVARDIGVPESTLRGWCKNEDKL). The H-T-H motif DNA-binding region spans 34 to 54 (KASVARDIGVPESTLRGWCKN). Disordered regions lie at residues 220-255 (TANN…SVKN), 336-369 (SPPI…TPSG), 443-525 (SETP…SDCI), 572-597 (NQHS…DEEE), and 652-683 (EPQV…RRRK). Positions 227–242 (SKPSVQPPLQVQSPRS) are enriched in low complexity. Polar residues-rich tracts occupy residues 338 to 352 (PIRS…QHAQ) and 445 to 460 (TPSV…NQLD). Residues 462–478 (IEGDEVTDPDLDAEIEG) are compositionally biased toward acidic residues. The segment covering 575 to 591 (SNNNDISASNNNNNNSN) has biased composition (low complexity).

In terms of assembly, homomers. Interacts with itself, danr, ey and dac to form a complex (or complexes) containing the RD factors.

It localises to the nucleus. In terms of biological role, probable transcription factor with a role in the retinal determination (RD) network. Regulates ato expression and is required for normal R8 induction and differentiation. Danr appears to repress Dan expression, but Dan is required for Danr expression anterior to the morphogenetic furrow (MF). Dan and Danr lie downstream of so and require dac function for highest levels of expression. Contributes to differentiation of antenna-specific characteristics; effector gene that acts downstream of homothorax (hth), Distal-less (Dll), cut (ct) and spineless (ss) genes to control differentiation of distal antennal structures. The sequence is that of Protein distal antenna from Drosophila pseudoobscura pseudoobscura (Fruit fly).